A 531-amino-acid chain; its full sequence is Cytochrome P450 monooxygenase peniB (531 aa).

A helical membrane pass occupies residues 30 to 48 (ILSIAAVVFLGYLLLRPLF). C445 is a binding site for heme.

The protein belongs to the cytochrome P450 family. It depends on heme as a cofactor.

It localises to the membrane. It carries out the reaction silphinene-15-oate + 2 reduced [NADPH--hemoprotein reductase] + 2 O2 = gamma-lactone-2-keto[5.5.5.5]fenestrane + 2 oxidized [NADPH--hemoprotein reductase] + 3 H2O + H(+). It functions in the pathway secondary metabolite biosynthesis; terpenoid biosynthesis. Its function is as follows. Cytochrome P450 monooxygenase; part of the gene cluster that mediates the biosynthesis of penifulvin A, a potent insecticidal sesquiterpene that features a [5.5.5.6]dioxafenestrane ring. Within the pathway, peniB catalyzes the multi-step oxidation of silphinene to synthesize gamma-lactone-2-keto[5.5.5.5]fenestrane, including oxidation of the C15 methylgroup in silphinene to form silphinene-15-oic acid, activationof the C1-C2 double bond to form the gamma-lactone-2-hydroxy[5.5.5.5]fenestrane, and dehydrogenation of the hydroxy group at C2 of gamma-lactone-2-hydroxy[5.5.5.5]fenestrane to generate gamma-lactone-2-keto[5.5.5.5]fenestrane. The first step of the pathway is performed by the sesquiterpene cyclase peniA that generates the angular triquinane scaffold silphinene via cyclization of the linear farnesyl pyrophosphate (FPP). The cytochrome P450 monooxygenase peniB and the flavin-dependent monooxygenase peniC then catalyze a series of oxidation reactions to transform silphinene into penifulvin A. The sequence is that of Cytochrome P450 monooxygenase peniB from Penicillium patulum (Penicillium griseofulvum).